The primary structure comprises 611 residues: Dihydroxy-acid dehydratase (611 aa).

Residue Asp-81 participates in Mg(2+) binding. Cys-122 provides a ligand contact to [2Fe-2S] cluster. Residues Asp-123 and Lys-124 each coordinate Mg(2+). Position 124 is an N6-carboxylysine (Lys-124). A [2Fe-2S] cluster-binding site is contributed by Cys-195. Glu-491 provides a ligand contact to Mg(2+). The active-site Proton acceptor is Ser-517.

The protein belongs to the IlvD/Edd family. In terms of assembly, homodimer. [2Fe-2S] cluster is required as a cofactor. Requires Mg(2+) as cofactor.

It catalyses the reaction (2R)-2,3-dihydroxy-3-methylbutanoate = 3-methyl-2-oxobutanoate + H2O. It carries out the reaction (2R,3R)-2,3-dihydroxy-3-methylpentanoate = (S)-3-methyl-2-oxopentanoate + H2O. The protein operates within amino-acid biosynthesis; L-isoleucine biosynthesis; L-isoleucine from 2-oxobutanoate: step 3/4. It participates in amino-acid biosynthesis; L-valine biosynthesis; L-valine from pyruvate: step 3/4. In terms of biological role, functions in the biosynthesis of branched-chain amino acids. Catalyzes the dehydration of (2R,3R)-2,3-dihydroxy-3-methylpentanoate (2,3-dihydroxy-3-methylvalerate) into 2-oxo-3-methylpentanoate (2-oxo-3-methylvalerate) and of (2R)-2,3-dihydroxy-3-methylbutanoate (2,3-dihydroxyisovalerate) into 2-oxo-3-methylbutanoate (2-oxoisovalerate), the penultimate precursor to L-isoleucine and L-valine, respectively. This is Dihydroxy-acid dehydratase from Pasteurella multocida (strain Pm70).